Here is a 657-residue protein sequence, read N- to C-terminus: Bifunctional lysine-specific demethylase and histidyl-hydroxylase NO66 (657 aa).

Disordered stretches follow at residues 1–141 and 165–198; these read MQKA…QTSP and KSCP…NSNE. Over residues 32–41 the composition is skewed to polar residues; sequence SAKTVDTVTD. The segment covering 55–71 has biased composition (basic and acidic residues); it reads AEKERRKYLQARVRAEG. Polar residues-rich tracts occupy residues 73 to 84 and 132 to 141; these read SASTSSKSNATR and RSQGLEQTSP. S133 is subject to Phosphoserine. Residue T139 is modified to Phosphothreonine. S140 carries the phosphoserine modification. A JmjC domain is found at 315–454; it reads NPSTYLLGLR…NLLETLMPIV (140 aa). Residues H355, D357, and H420 each contribute to the Fe cation site.

This sequence belongs to the ROX family. NO66 subfamily. Requires Fe(2+) as cofactor.

Its subcellular location is the nucleus. It catalyses the reaction N(6),N(6)-dimethyl-L-lysyl(36)-[histone H3] + 2 2-oxoglutarate + 2 O2 = L-lysyl(36)-[histone H3] + 2 formaldehyde + 2 succinate + 2 CO2. Its function is as follows. Oxygenase that can act as both a histone lysine demethylase and a ribosomal histidine hydroxylase. Specifically demethylates 'Lys-4' (H3K4me) and 'Lys-36' (H3K36me) of histone H3, thereby playing a central role in histone code. In Drosophila erecta (Fruit fly), this protein is Bifunctional lysine-specific demethylase and histidyl-hydroxylase NO66.